The chain runs to 685 residues: Protein SPT2 homolog (685 aa).

Residues 1–570 (MDFREILMIA…PPLSGYRAAQ (570 aa)) form an important for interaction with DNA region. Lysine 37 participates in a covalent cross-link: Glycyl lysine isopeptide (Lys-Gly) (interchain with G-Cter in SUMO2). A coiled-coil region spans residues 45-81 (QAFLKRKEEELRRKALEEKRRKEELVKKRIELKHDKK). A disordered region spans residues 79–168 (DKKARAMAKR…PLKSAPPPMN (90 aa)). Residues 101–111 (IEEKSKKRQAT) show a composition bias toward basic and acidic residues. Residues 123–148 (YEMEEENEFLEYNHAESEQEYEEEQE) adopt a coiled-coil conformation. A Glycyl lysine isopeptide (Lys-Gly) (interchain with G-Cter in SUMO2) cross-link involves residue lysine 187. 2 stretches are compositionally biased toward basic and acidic residues: residues 188 to 209 (VVKK…EFLE) and 260 to 275 (HAEK…EKHL). Disordered stretches follow at residues 188–615 (VVKK…QEEI) and 644–685 (SWKE…LKRR). Serine 278 carries the phosphoserine modification. Low complexity-rich tracts occupy residues 317-330 (SSTS…TSAS), 365-385 (SPGV…PSTG), and 402-415 (GSSS…ISGS). Over residues 416 to 431 (KKPTNDSNPSRRTVSG) the composition is skewed to polar residues. The span at 435–501 (PGQPASSSGG…PGRSISGSIP (67 aa)) shows a compositional bias: low complexity. Serine 471 bears the Phosphoserine mark. Over residues 519-529 (GPGQTVSSSGP) the composition is skewed to polar residues. The span at 542–553 (ISSKNIISRSSN) shows a compositional bias: low complexity. Positions 571–685 (GPQRLPFPTG…RRRAKKLKRR (115 aa)) are important for interaction with histones. N6-acetyllysine is present on lysine 582. Acidic residues predominate over residues 587-613 (YEEEDDDDDEYDSEMEDFIEDEGEPQE). Serine 599 carries the post-translational modification Phosphoserine. Composition is skewed to basic and acidic residues over residues 644-655 (SWKEQQKEEAKS) and 666-676 (EMRREEEEMQR). Residues 645-685 (WKEQQKEEAKSLRLGMQEDLEEMRREEEEMQRRRAKKLKRR) are a coiled coil.

Belongs to the SPT2 family. In terms of assembly, interacts with histones. Interacts with a heterotetrameric complex formed by histone H3 and H4, especially when the histone tetramer is not bound to DNA. Interacts with histone H3.3.

It localises to the nucleus. The protein localises to the nucleolus. Functionally, histone chaperone that stabilizes pre-existing histone tetramers and regulates replication-independent histone exchange on chromatin. Required for normal chromatin refolding in the coding region of transcribed genes, and for the suppression of spurious transcription. Binds DNA and histones and promotes nucleosome assembly (in vitro). Facilitates formation of tetrameric histone complexes containing histone H3 and H4. Modulates RNA polymerase 1-mediated transcription. Binds DNA, with a preference for branched DNA species, such as Y-form DNA and Holliday junction DNA. The chain is Protein SPT2 homolog (SPTY2D1) from Homo sapiens (Human).